Reading from the N-terminus, the 297-residue chain is rRNA 2'-O-methyltransferase fibrillarin (297 aa).

The interval 1 to 56 (MRGGFGRGGGGRGGSRGGRGGFGRGGGRGGGRGGGRGGGRGGGRGGGRGGGRGGAG) is disordered. Asymmetric dimethylarginine occurs at positions 2, 7, 12, 16, 19, 24, 28, 32, 36, 40, 44, 48, and 52. S-adenosyl-L-methionine-binding positions include 149–150 (TT), 168–169 (EF), 192–193 (DA), and 212–215 (DVAQ).

It belongs to the methyltransferase superfamily. Fibrillarin family. In terms of assembly, component of box C/D small nucleolar ribonucleoprotein (snoRNP) particles. It is associated with the U3, U8 and U13 small nuclear RNAs. In terms of processing, by homology to other fibrillarins, some or all of the N-terminal domain arginines are modified to asymmetric dimethylarginine (DMA).

It is found in the nucleus. It localises to the nucleolus. It carries out the reaction L-glutaminyl-[histone H2A] + S-adenosyl-L-methionine = N(5)-methyl-L-glutaminyl-[histone H2A] + S-adenosyl-L-homocysteine + H(+). Functionally, S-adenosyl-L-methionine-dependent methyltransferase that has the ability to methylate both RNAs and proteins. Involved in pre-rRNA processing. Utilizes the methyl donor S-adenosyl-L-methionine to catalyze the site-specific 2'-hydroxyl methylation of ribose moieties in pre-ribosomal RNA. Site specificity is provided by a guide RNA that base pairs with the substrate. Methylation occurs at a characteristic distance from the sequence involved in base pairing with the guide RNA. Also acts as a protein methyltransferase by mediating methylation of 'Gln-105' of histone H2A (H2AQ105me), a modification that impairs binding of the FACT complex and is specifically present at 35S ribosomal DNA locus. This chain is rRNA 2'-O-methyltransferase fibrillarin, found in Leishmania major.